Here is a 463-residue protein sequence, read N- to C-terminus: A-type ATP synthase subunit B (463 aa).

The protein belongs to the ATPase alpha/beta chains family. In terms of assembly, has multiple subunits with at least A(3), B(3), C, D, E, F, H, I and proteolipid K(x).

It is found in the cell membrane. Component of the A-type ATP synthase that produces ATP from ADP in the presence of a proton gradient across the membrane. The B chain is a regulatory subunit. The protein is A-type ATP synthase subunit B of Desulfurococcus sp. (strain SY).